The sequence spans 764 residues: Molybdenum cofactor sulfurase 1 (764 aa).

Lys-228 is subject to N6-(pyridoxal phosphate)lysine. Cys-394 is a catalytic residue. Residues 607 to 762 (LRLLKQSDEE…LYCNSVVEGL (156 aa)) form the MOSC domain.

Belongs to the class-V pyridoxal-phosphate-dependent aminotransferase family. MOCOS subfamily. It depends on pyridoxal 5'-phosphate as a cofactor.

The enzyme catalyses Mo-molybdopterin + L-cysteine + AH2 = thio-Mo-molybdopterin + L-alanine + A + H2O. Functionally, sulfurates the molybdenum cofactor. Sulfation of molybdenum is essential for xanthine dehydrogenase (XDH) and aldehyde oxidase (ADO) enzymes in which molybdenum cofactor is liganded by 1 oxygen and 1 sulfur atom in active form. This is Molybdenum cofactor sulfurase 1 from Aedes aegypti (Yellowfever mosquito).